A 118-amino-acid chain; its full sequence is DNA mimic protein DMP12 (118 aa).

This sequence belongs to the DMP12-like protein family. In terms of assembly, monomer. Interacts with the dimeric form of the DNA-binding protein HU.

Functionally, acts as a DNA mimic. Interacts with the DNA-binding protein HU and partially prevents the binding of HU protein to DNA by occupying the DNA binding sites on the protein. However, the relatively weak affinity of DMP12 for HU suggests that it may not completely block the HU protein-DNA binding, and that DMP12 is more likely to act as a regulator than a competitive inhibitor. It protects HU protein from limited digestion by trypsin in a limited trypsin digestion assay, suggesting that it may serve to protect the HU protein and improve the stability of unbound HU protein. The chain is DNA mimic protein DMP12 from Neisseria meningitidis serogroup B (strain ATCC BAA-335 / MC58).